The sequence spans 429 residues: RNA-binding protein BRN2 (429 aa).

RRM domains lie at 12-93 (VKLF…YADG), 100-180 (HKLF…WADT), and 330-408 (ANLF…LKRD). Residues 410 to 429 (GQQQQQQQSKNPLFNGLLNS) are disordered. The segment covering 418-429 (SKNPLFNGLLNS) has biased composition (polar residues).

Expressed in roots, stems, flowers and siliques.

The protein resides in the cytoplasm. Its function is as follows. RNA-binding protein involved in the regulation of flowering time. Acts as a repressor of the activity of SOC1, a transcriptional activator of flowering time. Binds to the 3'-UTR of SOC1 mRNA in the cytoplasm and participates in SOC1 mRNA decay, mediated by the distal region of the SOC1 3'-UTR. The polypeptide is RNA-binding protein BRN2 (Arabidopsis thaliana (Mouse-ear cress)).